The following is a 412-amino-acid chain: MKNLILKEILNNELKRQQGYIELIASENYVSEQILEATGSVFTNKYCEGYPNRRYYGGCEYADQIEQLAIDKAKEIFNAKFANVQPHSGTQANVAAYLSVLKPNDKILAMGLNEGGHLSHGSKVNISGKTYEADHYGVDKETQCLDYDAILKQAQEVKPKLIVCGASNYSRVVDFKKFGEIAKSVGAYLLADVAHISGLIVAGYHPNPLPYADIVTTTTHKTLRGPRSGLILTNNEELIKKINSAVFPGSQGGPLMHVIAAKYLCFDEASKPEFKTYIKNVIDNIAILSQTLKELGYKIIADGSDNHLLSVDLYSSKQITGDLVEQWLEQAKIVVNKNLIPYDINSAKSPSGIRIGSAAMTTRGFTTKEFKQIGLWIHEIIESKGNPNTINKIRNEVDLLVKKFPIYQDIKY.

(6S)-5,6,7,8-tetrahydrofolate contacts are provided by residues Leu-112 and 116-118 (GHL). Lys-221 bears the N6-(pyridoxal phosphate)lysine mark. Position 237 (Glu-237) interacts with (6S)-5,6,7,8-tetrahydrofolate.

It belongs to the SHMT family. Homodimer. Pyridoxal 5'-phosphate is required as a cofactor.

The protein localises to the cytoplasm. It carries out the reaction (6R)-5,10-methylene-5,6,7,8-tetrahydrofolate + glycine + H2O = (6S)-5,6,7,8-tetrahydrofolate + L-serine. It participates in one-carbon metabolism; tetrahydrofolate interconversion. The protein operates within amino-acid biosynthesis; glycine biosynthesis; glycine from L-serine: step 1/1. Its function is as follows. Catalyzes the reversible interconversion of serine and glycine with tetrahydrofolate (THF) serving as the one-carbon carrier. This reaction serves as the major source of one-carbon groups required for the biosynthesis of purines, thymidylate, methionine, and other important biomolecules. Also exhibits THF-independent aldolase activity toward beta-hydroxyamino acids, producing glycine and aldehydes, via a retro-aldol mechanism. The protein is Serine hydroxymethyltransferase of Malacoplasma penetrans (strain HF-2) (Mycoplasma penetrans).